The sequence spans 387 residues: Succinate--CoA ligase [ADP-forming] subunit beta (387 aa).

Positions 9 to 236 (KGLFAKHNVP…RAATDPLELK (228 aa)) constitute an ATP-grasp domain. Residues Lys45, 52 to 54 (GRG), Ser94, and Glu99 contribute to the ATP site. 2 residues coordinate Mg(2+): Asn191 and Asp205. Residues Asn256 and 318 to 320 (GIT) each bind substrate.

The protein belongs to the succinate/malate CoA ligase beta subunit family. In terms of assembly, heterotetramer of two alpha and two beta subunits. The cofactor is Mg(2+).

The catalysed reaction is succinate + ATP + CoA = succinyl-CoA + ADP + phosphate. It carries out the reaction GTP + succinate + CoA = succinyl-CoA + GDP + phosphate. The protein operates within carbohydrate metabolism; tricarboxylic acid cycle; succinate from succinyl-CoA (ligase route): step 1/1. Functionally, succinyl-CoA synthetase functions in the citric acid cycle (TCA), coupling the hydrolysis of succinyl-CoA to the synthesis of either ATP or GTP and thus represents the only step of substrate-level phosphorylation in the TCA. The beta subunit provides nucleotide specificity of the enzyme and binds the substrate succinate, while the binding sites for coenzyme A and phosphate are found in the alpha subunit. This Mycobacterium ulcerans (strain Agy99) protein is Succinate--CoA ligase [ADP-forming] subunit beta.